The primary structure comprises 432 residues: Chaperone SurA (432 aa).

The signal sequence occupies residues 1–26 (MKKIASFCSAAVLIASSFLLNNTVQA). 2 consecutive PpiC domains span residues 176 to 277 (QTEY…KVQD) and 286 to 386 (VQEV…EVTG).

Its subcellular location is the periplasm. The catalysed reaction is [protein]-peptidylproline (omega=180) = [protein]-peptidylproline (omega=0). Functionally, chaperone involved in the correct folding and assembly of outer membrane proteins. Recognizes specific patterns of aromatic residues and the orientation of their side chains, which are found more frequently in integral outer membrane proteins. May act in both early periplasmic and late outer membrane-associated steps of protein maturation. This is Chaperone SurA from Idiomarina loihiensis (strain ATCC BAA-735 / DSM 15497 / L2-TR).